The primary structure comprises 200 residues: NADH-quinone oxidoreductase subunit C 1 (200 aa).

It belongs to the complex I 30 kDa subunit family. NDH-1 is composed of 14 different subunits. Subunits NuoB, C, D, E, F, and G constitute the peripheral sector of the complex.

It is found in the cell inner membrane. It carries out the reaction a quinone + NADH + 5 H(+)(in) = a quinol + NAD(+) + 4 H(+)(out). Functionally, NDH-1 shuttles electrons from NADH, via FMN and iron-sulfur (Fe-S) centers, to quinones in the respiratory chain. The immediate electron acceptor for the enzyme in this species is believed to be ubiquinone. Couples the redox reaction to proton translocation (for every two electrons transferred, four hydrogen ions are translocated across the cytoplasmic membrane), and thus conserves the redox energy in a proton gradient. This is NADH-quinone oxidoreductase subunit C 1 from Rhizobium etli (strain CIAT 652).